Here is a 186-residue protein sequence, read N- to C-terminus: Ribosome-recycling factor (186 aa).

This sequence belongs to the RRF family.

Its subcellular location is the cytoplasm. In terms of biological role, responsible for the release of ribosomes from messenger RNA at the termination of protein biosynthesis. May increase the efficiency of translation by recycling ribosomes from one round of translation to another. The polypeptide is Ribosome-recycling factor (Chlorobaculum parvum (strain DSM 263 / NCIMB 8327) (Chlorobium vibrioforme subsp. thiosulfatophilum)).